A 190-amino-acid chain; its full sequence is Imidazoleglycerol-phosphate dehydratase (190 aa).

This sequence belongs to the imidazoleglycerol-phosphate dehydratase family.

The protein resides in the cytoplasm. It carries out the reaction D-erythro-1-(imidazol-4-yl)glycerol 3-phosphate = 3-(imidazol-4-yl)-2-oxopropyl phosphate + H2O. It participates in amino-acid biosynthesis; L-histidine biosynthesis; L-histidine from 5-phospho-alpha-D-ribose 1-diphosphate: step 6/9. The sequence is that of Imidazoleglycerol-phosphate dehydratase from Campylobacter hominis (strain ATCC BAA-381 / DSM 21671 / CCUG 45161 / LMG 19568 / NCTC 13146 / CH001A).